Consider the following 442-residue polypeptide: Phosphatidylserine synthase 2 (442 aa).

Over Met-1–Arg-40 the chain is Cytoplasmic. Residues Ala-41–Glu-61 form a helical membrane-spanning segment. Over Glu-62–Gly-74 the chain is Lumenal. Residues Ile-75–Phe-95 form a helical membrane-spanning segment. At Ser-96–Arg-104 the chain is on the cytoplasmic side. A helical transmembrane segment spans residues Phe-105 to Val-125. At Gln-126–Arg-291 the chain is on the lumenal side. Residues Asn-159 and Asn-215 are each glycosylated (N-linked (GlcNAc...) asparagine). Residues Trp-292–Leu-312 traverse the membrane as a helical segment. Lys-313 is a topological domain (cytoplasmic). The chain crosses the membrane as a helical span at residues Phe-314–Asn-334. Over Val-335 to Lys-354 the chain is Lumenal. Residues Lys-355 to Val-375 traverse the membrane as a helical segment. Over Lys-376–Thr-381 the chain is Cytoplasmic. Residues Leu-382–Leu-402 traverse the membrane as a helical segment. The Lumenal segment spans residues Thr-403–His-442.

It belongs to the phosphatidyl serine synthase family.

It is found in the endoplasmic reticulum membrane. The enzyme catalyses a 1,2-diacyl-sn-glycero-3-phosphoethanolamine + L-serine = a 1,2-diacyl-sn-glycero-3-phospho-L-serine + ethanolamine. It carries out the reaction 1-hexadecanoyl-2-(9Z-octadecenoyl)-sn-glycero-3-phosphoethanolamine + L-serine = 1-hexadecanoyl-2-(9Z-octadecenoyl)-sn-glycero-3-phospho-L-serine + ethanolamine. The catalysed reaction is 1-hexadecanoyl-2-(4Z,7Z,10Z,13Z,16Z,19Z-docosahexaenoyl)-sn-glycero-3-phosphoethanolamine + L-serine = 1-hexadecanoyl-2-(4Z,7Z,10Z,13Z,16Z,19Z-docosahexaenoyl)-sn-glycero-3-phosphoserine + ethanolamine. It catalyses the reaction 1-octadecanoyl-2-(5Z,8Z,11Z,14Z)-eicosatetraenoyl-sn-glycero-3-phosphoethanolamine + L-serine = 1-octadecanoyl-2-(5Z,8Z,11Z,14Z)-eicosatetraenoyl-sn-glycero-3-phosphoserine + ethanolamine. The enzyme catalyses 1-octadecanoyl-2-(4Z,7Z,10Z,13Z,16Z,19Z-docosahexaenoyl)-sn-glycero-3-phosphoethanolamine + L-serine = 1-octadecanoyl-2-(4Z,7Z,10Z,13Z,16Z,19Z-docosahexaenoyl)-sn-glycero-3-phosphoserine + ethanolamine. It carries out the reaction 1-(1Z-octadecenyl)-2-(4Z,7Z,10Z,13Z,16Z,19Z-docosahexaenoyl)-sn-glycero-3-phosphoethanolamine + L-serine = 1-(1Z-octadecenyl)-2-(4Z,7Z,10Z,13Z,16Z,19Z-docosahexaenoyl)-sn-glycero-3-phospho-L-serine + ethanolamine. The catalysed reaction is 1-octadecanoyl-2-(9Z-octadecenoyl)-sn-glycero-3-phosphoethanolamine + L-serine = 1-octadecanoyl-2-(9Z-octadecenoyl)-sn-glycero-3-phospho-L-serine + ethanolamine. It catalyses the reaction 1-(1Z-octadecenyl)-2-(9Z-octadecenoyl)-sn-glycero-3-phosphoethanolamine + L-serine = 1-(1Z-octadecenyl)-2-(9Z-octadecenoyl)-sn-glycero-3-phospho-L-serine + ethanolamine. The enzyme catalyses 1-(1Z-octadecenyl)-2-(5Z,8Z,11Z,14Z- eicosatetraenoyl)-sn-glycero-3-phosphoethanolamine + L-serine = 1-(1Z-octadecenyl)-2-(5Z,8Z,11Z,14Z-eicosatetraenoyl)-sn-glycero-3-phospho-L-serine + ethanolamine. It participates in phospholipid metabolism; phosphatidylserine biosynthesis. Its function is as follows. Catalyzes a base-exchange reaction in which the polar head group of phosphatidylethanolamine (PE) or phosphatidylcholine (PC) is replaced by L-serine. Catalyzes the conversion of phosphatatidylethanolamine and does not act on phosphatidylcholine. Can utilize both phosphatidylethanolamine (PE) plasmalogen and diacyl PE as substrate and the latter is six times better utilized, indicating the importance of an ester linkage at the sn-1 position. Although it shows no sn-1 fatty acyl preference, exhibits significant preference towards docosahexaenoic acid (22:6n-3) compared with 18:1 or 20:4 at the sn-2 position. This is Phosphatidylserine synthase 2 (PTDSS1) from Gallus gallus (Chicken).